We begin with the raw amino-acid sequence, 629 residues long: Protein SPT2 homolog (629 aa).

The important for interaction with DNA stretch occupies residues 1–522 (MDFDSVLSIA…SGHRILVKPS (522 aa)). Residues 45 to 72 (QAFLKKKAVEQKNKEQQDKKAKEDLLAK) adopt a coiled-coil conformation. Residues 53–93 (VEQKNKEQQDKKAKEDLLAKRVELKSDRKARAMASRTKDNF) are compositionally biased toward basic and acidic residues. Disordered stretches follow at residues 53–181 (VEQK…ASSS), 206–533 (KTEE…TSSY), and 608–629 (EDEEEERRELEEMQRKNAKKRK). Polar residues predominate over residues 111-123 (KGSSTEEQQSSTK). Residues 127 to 144 (GDYDDEDNFDYEGTDSES) are compositionally biased toward acidic residues. Residues 203–228 (VVKKTEERLRTAEEIRELEMERRVKK) adopt a coiled-coil conformation. Basic and acidic residues-rich tracts occupy residues 206–247 (KTEE…KDSR) and 257–277 (KHVDRDGKNGRFPRPSEEKHQ). Polar residues-rich tracts occupy residues 278-297 (SSSTSKKPKLQASSERTPTS), 305-327 (SNSGSSGALNSKSAMKNGASFQA), 335-345 (SQGQRPATPSD), 353-364 (VSLTQAKSSISG), 387-398 (SNFSTSGPSQKP), 437-450 (NLQSQQFPGSSRAS), and 462-490 (SGSQINRMSSGPGRSQCTVVSETISTKNI). An important for interaction with histones region spans residues 523–629 (GPALPPITSS…MQRKNAKKRK (107 aa)). Residues 591–629 (WKEQQKEEARSLRMAVLEDEEEERRELEEMQRKNAKKRK) adopt a coiled-coil conformation.

Belongs to the SPT2 family. In terms of assembly, interacts with histones. Interacts with a heterotetrameric complex formed by histone H3 and H4, especially when the histone tetramer is not bound to DNA.

The protein localises to the nucleus. It localises to the nucleolus. Functionally, histone chaperone that stabilizes pre-existing histone tetramers and regulates replication-independent histone exchange on chromatin. Required for normal chromatin refolding in the coding region of transcribed genes, and for the suppression of spurious transcription. Binds DNA and histones and promotes nucleosome assembly (in vitro). Facilitates formation of tetrameric histone complexes containing histone H3 and H4. Modulates RNA polymerase 1-mediated transcription. Binds DNA, with a preference for branched DNA species, such as Y-form DNA and Holliday junction DNA. This is Protein SPT2 homolog (spty2d1) from Danio rerio (Zebrafish).